The primary structure comprises 544 residues: CTP synthase (544 aa).

Residues 1–266 (MSTKFIFVTG…DYFVCRRFHL (266 aa)) are amidoligase domain. S14 lines the CTP pocket. S14 serves as a coordination point for UTP. ATP is bound by residues 15–20 (SLGKGI) and D72. D72 and E140 together coordinate Mg(2+). CTP contacts are provided by residues 147–149 (DIE), 187–192 (KTKPTQ), and K223. UTP is bound by residues 187–192 (KTKPTQ) and K223. In terms of domain architecture, Glutamine amidotransferase type-1 spans 291–542 (TIGMVGKYIE…VAAAHIHQKA (252 aa)). G352 lines the L-glutamine pocket. Residue C379 is the Nucleophile; for glutamine hydrolysis of the active site. Residues 380–383 (LGMQ), E403, and R470 contribute to the L-glutamine site. Active-site residues include H515 and E517.

This sequence belongs to the CTP synthase family. As to quaternary structure, homotetramer.

It carries out the reaction UTP + L-glutamine + ATP + H2O = CTP + L-glutamate + ADP + phosphate + 2 H(+). The enzyme catalyses L-glutamine + H2O = L-glutamate + NH4(+). The catalysed reaction is UTP + NH4(+) + ATP = CTP + ADP + phosphate + 2 H(+). The protein operates within pyrimidine metabolism; CTP biosynthesis via de novo pathway; CTP from UDP: step 2/2. Allosterically activated by GTP, when glutamine is the substrate; GTP has no effect on the reaction when ammonia is the substrate. The allosteric effector GTP functions by stabilizing the protein conformation that binds the tetrahedral intermediate(s) formed during glutamine hydrolysis. Inhibited by the product CTP, via allosteric rather than competitive inhibition. Its function is as follows. Catalyzes the ATP-dependent amination of UTP to CTP with either L-glutamine or ammonia as the source of nitrogen. Regulates intracellular CTP levels through interactions with the four ribonucleotide triphosphates. This Pseudoalteromonas translucida (strain TAC 125) protein is CTP synthase.